A 394-amino-acid polypeptide reads, in one-letter code: MGIKQLFSVIKDEAPDAIKEGEIKNQFGRKVAIDASMSIYSFLIAVRSDGQQLMNEAGETTSHLMGMFYRTLRMVDNGIKPLYVFDGAPPKLKSGELAKRFQRKQEATEGLEEAKETGTAEDVEKFSRRTVRVTREHNAECQKLLKLMGIPYIVAPTEAEAQCAVLARAGKVYAAASEDMDTLCFNAPILLRHLTFSEQRKEPIQEIHLEKVLEGLGMERKQFIDLCILLGCDYLDPIPKVGPSTALKLIREHGTLEKVVEWMKADPKGRYQIPEDWPFEDARTLFFEPDVRPADDPLCDFKWDKPDIEGLIQFLVHEKGFSEDRVRSAGTKLEKNMKTSQQARIEGFFKILPKTEEEKKAHKRKLEEQAEQKRKKVKEEKKEKAKLKAKPRGA.

Residues 1 to 104 form an N-domain region; sequence MGIKQLFSVI…GELAKRFQRK (104 aa). Mg(2+) is bound at residue D34. Positions 47 and 70 each coordinate DNA. Residues D86, E158, E160, D179, and D181 each coordinate Mg(2+). The tract at residues 122-253 is I-domain; sequence DVEKFSRRTV…STALKLIREH (132 aa). E158 contributes to the DNA binding site. DNA-binding residues include G231 and D233. D233 lines the Mg(2+) pocket. An interaction with PCNA region spans residues 341–349; it reads QQARIEGFF. The span at 356 to 383 shows a compositional bias: basic and acidic residues; the sequence is EEEKKAHKRKLEEQAEQKRKKVKEEKKE. A disordered region spans residues 356–394; sequence EEEKKAHKRKLEEQAEQKRKKVKEEKKEKAKLKAKPRGA. The span at 384–394 shows a compositional bias: basic residues; sequence KAKLKAKPRGA.

It belongs to the XPG/RAD2 endonuclease family. FEN1 subfamily. In terms of assembly, interacts with PCNA. Three molecules of dnr-8/fen1 bind to one PCNA trimer with each molecule binding to one PCNA monomer. PCNA stimulates the nuclease activity without altering cleavage specificity. Requires Mg(2+) as cofactor. Phosphorylated. Phosphorylation upon DNA damage induces relocalization to the nuclear plasma.

The protein localises to the nucleus. It is found in the nucleolus. The protein resides in the nucleoplasm. Its subcellular location is the mitochondrion. In terms of biological role, structure-specific nuclease with 5'-flap endonuclease and 5'-3' exonuclease activities involved in DNA replication and repair. During DNA replication, cleaves the 5'-overhanging flap structure that is generated by displacement synthesis when DNA polymerase encounters the 5'-end of a downstream Okazaki fragment. It enters the flap from the 5'-end and then tracks to cleave the flap base, leaving a nick for ligation. Also involved in the long patch base excision repair (LP-BER) pathway, by cleaving within the apurinic/apyrimidinic (AP) site-terminated flap. Acts as a genome stabilization factor that prevents flaps from equilibrating into structures that lead to duplications and deletions. Also possesses 5'-3' exonuclease activity on nicked or gapped double-stranded DNA, and exhibits RNase H activity. Also involved in replication and repair of rDNA and in repairing mitochondrial DNA. This chain is Flap endonuclease 1 (dnr-8), found in Neurospora crassa (strain ATCC 24698 / 74-OR23-1A / CBS 708.71 / DSM 1257 / FGSC 987).